We begin with the raw amino-acid sequence, 201 residues long: Protein S40-5 (201 aa).

Disordered regions lie at residues 1–39 (MARG…LTEE) and 134–178 (SIHE…EGVG). Positions 17-29 (GSSYSYGDSNGNS) are enriched in low complexity.

It belongs to the senescence regulator S40 family.

Its subcellular location is the cytoplasm. The polypeptide is Protein S40-5 (Arabidopsis thaliana (Mouse-ear cress)).